Reading from the N-terminus, the 215-residue chain is Adenylate kinase (215 aa).

10 to 15 contributes to the ATP binding site; sequence GAGKGT. The tract at residues 30–59 is NMP; sequence STGDMFRLAIKEGTELGKKAKEFMDQGDLV. Residues Thr-31, Arg-36, 57-59, 85-88, and Gln-92 contribute to the AMP site; these read DLV and GFPR. Positions 126–163 are LID; it reads GRRICPTCGTAYHVVYNPPKEEGICDKDGSQLIQRDDD. Position 127 (Arg-127) interacts with ATP. Cys-130, Cys-133, Cys-150, and Asp-153 together coordinate Zn(2+). 2 residues coordinate AMP: Arg-160 and Arg-171. An ATP-binding site is contributed by Arg-199.

It belongs to the adenylate kinase family. As to quaternary structure, monomer.

It localises to the cytoplasm. It catalyses the reaction AMP + ATP = 2 ADP. The protein operates within purine metabolism; AMP biosynthesis via salvage pathway; AMP from ADP: step 1/1. Functionally, catalyzes the reversible transfer of the terminal phosphate group between ATP and AMP. Plays an important role in cellular energy homeostasis and in adenine nucleotide metabolism. This Oceanobacillus iheyensis (strain DSM 14371 / CIP 107618 / JCM 11309 / KCTC 3954 / HTE831) protein is Adenylate kinase.